The sequence spans 86 residues: Protein Tat (86 aa).

The interaction with human CREBBP stretch occupies residues 1–24 (MDPVDPNQEPWNHPGSQPRTACNN). A transactivation region spans residues 1–48 (MDPVDPNQEPWNHPGSQPRTACNNCYCKKCCYHCQLCFLKKGLGIYYG). Positions 22, 25, and 27 each coordinate Zn(2+). A cysteine-rich region spans residues 22 to 37 (CNNCYCKKCCYHCQLC). Lys-28 bears the N6-acetyllysine; by host PCAF mark. The Zn(2+) site is built by Cys-30, His-33, Cys-34, and Cys-37. The segment at 38 to 48 (FLKKGLGIYYG) is core. A compositionally biased stretch (basic residues) spans 48–58 (GRKKRRQRRGT). Positions 48-86 (GRKKRRQRRGTPKSLQDHQTLIPKQPLSRTSGDPTGPEK) are disordered. Positions 49–57 (RKKRRQRRG) match the Nuclear localization signal, RNA-binding (TAR), and protein transduction motif. The segment at 49-86 (RKKRRQRRGTPKSLQDHQTLIPKQPLSRTSGDPTGPEK) is interaction with the host capping enzyme RNGTT. 2 positions are modified to N6-acetyllysine; by host EP300 and GCN5L2: Lys-50 and Lys-51. Arg-52 and Arg-53 each carry asymmetric dimethylarginine; by host PRMT6. Lys-71 participates in a covalent cross-link: Glycyl lysine isopeptide (Lys-Gly) (interchain with G-Cter in ubiquitin).

Belongs to the lentiviruses Tat family. As to quaternary structure, interacts with host CCNT1. Associates with the P-TEFb complex composed at least of Tat, P-TEFb (CDK9 and CCNT1), TAR RNA, RNA Pol II. Recruits the HATs CREBBP, TAF1/TFIID, EP300, PCAF and GCN5L2. Interacts with host KAT5/Tip60; this interaction targets the latter to degradation. Interacts with the host deacetylase SIRT1. Interacts with host capping enzyme RNGTT; this interaction stimulates RNGTT. Binds to host KDR, and to the host integrins ITGAV/ITGB3 and ITGA5/ITGB1. Interacts with host KPNB1/importin beta-1 without previous binding to KPNA1/importin alpha-1. Interacts with EIF2AK2. Interacts with host nucleosome assembly protein NAP1L1; this interaction may be required for the transport of Tat within the nucleus, since the two proteins interact at the nuclear rim. Interacts with host C1QBP/SF2P32; this interaction involves lysine-acetylated Tat. Interacts with the host chemokine receptors CCR2, CCR3 and CXCR4. Interacts with host DPP4/CD26; this interaction may trigger an anti-proliferative effect. Interacts with host LDLR. Interacts with the host extracellular matrix metalloproteinase MMP1. Interacts with host PRMT6; this interaction mediates Tat's methylation. Interacts with, and is ubiquitinated by MDM2/Hdm2. Interacts with host PSMC3 and HTATIP2. Interacts with STAB1; this interaction may overcome SATB1-mediated repression of IL2 and IL2RA (interleukin) in T cells by binding to the same domain than HDAC1. Interacts (when acetylated) with human CDK13, thereby increasing HIV-1 mRNA splicing and promoting the production of the doubly spliced HIV-1 protein Nef. Interacts with host TBP; this interaction modulates the activity of transcriptional pre-initiation complex. Interacts with host RELA. Interacts with host PLSCR1; this interaction negatively regulates Tat transactivation activity by altering its subcellular distribution. Asymmetrical arginine methylation by host PRMT6 seems to diminish the transactivation capacity of Tat and affects the interaction with host CCNT1. In terms of processing, acetylation by EP300, CREBBP, GCN5L2/GCN5 and PCAF regulates the transactivation activity of Tat. EP300-mediated acetylation of Lys-50 promotes dissociation of Tat from the TAR RNA through the competitive binding to PCAF's bromodomain. In addition, the non-acetylated Tat's N-terminus can also interact with PCAF. PCAF-mediated acetylation of Lys-28 enhances Tat's binding to CCNT1. Lys-50 is deacetylated by SIRT1. Post-translationally, polyubiquitination by host MDM2 does not target Tat to degradation, but activates its transactivation function and fosters interaction with CCNT1 and TAR RNA. Phosphorylated by EIF2AK2 on serine and threonine residues adjacent to the basic region important for TAR RNA binding and function. Phosphorylation of Tat by EIF2AK2 is dependent on the prior activation of EIF2AK2 by dsRNA.

The protein resides in the host nucleus. The protein localises to the host nucleolus. Its subcellular location is the host cytoplasm. It localises to the secreted. Transcriptional activator that increases RNA Pol II processivity, thereby increasing the level of full-length viral transcripts. Recognizes a hairpin structure at the 5'-LTR of the nascent viral mRNAs referred to as the transactivation responsive RNA element (TAR) and recruits the cyclin T1-CDK9 complex (P-TEFb complex) that will in turn hyperphosphorylate the RNA polymerase II to allow efficient elongation. The CDK9 component of P-TEFb and other Tat-activated kinases hyperphosphorylate the C-terminus of RNA Pol II that becomes stabilized and much more processive. Other factors such as HTATSF1/Tat-SF1, SUPT5H/SPT5, and HTATIP2 are also important for Tat's function. Besides its effect on RNA Pol II processivity, Tat induces chromatin remodeling of proviral genes by recruiting the histone acetyltransferases (HATs) CREBBP, EP300 and PCAF to the chromatin. This also contributes to the increase in proviral transcription rate, especially when the provirus integrates in transcriptionally silent region of the host genome. To ensure maximal activation of the LTR, Tat mediates nuclear translocation of NF-kappa-B by interacting with host RELA. Through its interaction with host TBP, Tat may also modulate transcription initiation. Tat can reactivate a latently infected cell by penetrating in it and transactivating its LTR promoter. In the cytoplasm, Tat is thought to act as a translational activator of HIV-1 mRNAs. Functionally, extracellular circulating Tat can be endocytosed by surrounding uninfected cells via the binding to several surface receptors such as CD26, CXCR4, heparan sulfate proteoglycans (HSPG) or LDLR. Neurons are rarely infected, but they internalize Tat via their LDLR. Through its interaction with nuclear HATs, Tat is potentially able to control the acetylation-dependent cellular gene expression. Modulates the expression of many cellular genes involved in cell survival, proliferation or in coding for cytokines or cytokine receptors. Tat plays a role in T-cell and neurons apoptosis. Tat induced neurotoxicity and apoptosis probably contribute to neuroAIDS. Circulating Tat also acts as a chemokine-like and/or growth factor-like molecule that binds to specific receptors on the surface of the cells, affecting many cellular pathways. In the vascular system, Tat binds to ITGAV/ITGB3 and ITGA5/ITGB1 integrins dimers at the surface of endothelial cells and competes with bFGF for heparin-binding sites, leading to an excess of soluble bFGF. The polypeptide is Protein Tat (Human immunodeficiency virus type 1 group M subtype H (isolate VI991) (HIV-1)).